A 304-amino-acid polypeptide reads, in one-letter code: 2-phospho-L-lactate transferase (304 aa).

Aspartate 49 provides a ligand contact to 7,8-didemethyl-8-hydroxy-5-deazariboflavin.

Belongs to the CofD family. As to quaternary structure, homodimer. Requires Mg(2+) as cofactor.

The enzyme catalyses (2S)-lactyl-2-diphospho-5'-guanosine + 7,8-didemethyl-8-hydroxy-5-deazariboflavin = oxidized coenzyme F420-0 + GMP + H(+). It functions in the pathway cofactor biosynthesis; coenzyme F420 biosynthesis. Functionally, catalyzes the transfer of the 2-phospholactate moiety from (2S)-lactyl-2-diphospho-5'-guanosine to 7,8-didemethyl-8-hydroxy-5-deazariboflavin (FO) with the formation of oxidized coenzyme F420-0 and GMP. The chain is 2-phospho-L-lactate transferase from Methanocorpusculum labreanum (strain ATCC 43576 / DSM 4855 / Z).